A 985-amino-acid polypeptide reads, in one-letter code: Alanine--tRNA ligase, mitochondrial (985 aa).

A mitochondrion-targeting transit peptide spans 1-23; the sequence is MAASVAAAAGRLRRAIGRSCPWQ. Residues R105, H123, W205, and 235–237 contribute to the ATP site; that span reads LWN. Positions 237 and 260 each coordinate L-alanine. Position 264 (G264) interacts with ATP. Residues H632, H636, C749, and H753 each contribute to the Zn(2+) site.

This sequence belongs to the class-II aminoacyl-tRNA synthetase family. Monomer. The cofactor is Zn(2+).

It is found in the mitochondrion. It carries out the reaction tRNA(Ala) + L-alanine + ATP = L-alanyl-tRNA(Ala) + AMP + diphosphate. It catalyses the reaction (S)-lactate + ATP + H(+) = (S)-lactoyl-AMP + diphosphate. The catalysed reaction is (S)-lactoyl-AMP + L-lysyl-[protein] = N(6)-[(S)-lactoyl]-L-lysyl-[protein] + AMP + 2 H(+). Catalyzes the attachment of alanine to tRNA(Ala) in a two-step reaction: alanine is first activated by ATP to form Ala-AMP and then transferred to the acceptor end of tRNA(Ala). Also edits incorrectly charged tRNA(Ala) via its editing domain. In presence of high levels of lactate, also acts as a protein lactyltransferase that mediates lactylation of lysine residues in target proteins, such as CGAS. Acts as an inhibitor of cGAS/STING signaling by catalyzing lactylation of CGAS, preventing the formation of liquid-like droplets in which CGAS is activated. This is Alanine--tRNA ligase, mitochondrial (Aars2) from Rattus norvegicus (Rat).